The sequence spans 173 residues: Photosystem I assembly protein Ycf3 (173 aa).

TPR repeat units follow at residues 35-68 (AFSYYRDGMSAQSEGEYAEALENYYEALKLEEDP), 72-105 (SYILYNIGLIYASNGEYIKALEYYHQGLELNFKL), and 120-153 (GVQAVEEKNIELSKLMFDKAAQYWQQAIKLAPDN).

It belongs to the Ycf3 family.

It is found in the plastid. The protein localises to the chloroplast thylakoid membrane. Functionally, essential for the assembly of the photosystem I (PSI) complex. May act as a chaperone-like factor to guide the assembly of the PSI subunits. This chain is Photosystem I assembly protein Ycf3, found in Porphyra purpurea (Red seaweed).